Consider the following 347-residue polypeptide: Leucine-rich repeat-containing protein 69 (347 aa).

9 LRR repeats span residues 15–37 (NTKILTLNGKRITKMPSTLEKLP), 38–60 (NLKTLDLQNNSISKVCPELRTLT), 61–82 (QLTLLNLGNNHLQEVPEEIKYL), 84–105 (SLKNLHLFGNRICRIAPGVFNG), 108–129 (RLIMLNLNDNRLTSLPQEIGRL), 131–152 (SLTYLSLNRNNLTVIPKELCSL), 154–175 (HLSELHLNYNQIVYIPEEIKFL), 177–198 (NLQQLFLVRNNIEELPEEICHL), and 200–222 (KLRVLDIAGNVIQIFPAGFQNLR).

This sequence belongs to the LRRC69 family.

This is Leucine-rich repeat-containing protein 69 (Lrrc69) from Mus musculus (Mouse).